Reading from the N-terminus, the 468-residue chain is ATP synthase subunit beta (468 aa).

155-162 (GGAGVGKT) contacts ATP.

It belongs to the ATPase alpha/beta chains family. F-type ATPases have 2 components, CF(1) - the catalytic core - and CF(0) - the membrane proton channel. CF(1) has five subunits: alpha(3), beta(3), gamma(1), delta(1), epsilon(1). CF(0) has three main subunits: a(1), b(2) and c(9-12). The alpha and beta chains form an alternating ring which encloses part of the gamma chain. CF(1) is attached to CF(0) by a central stalk formed by the gamma and epsilon chains, while a peripheral stalk is formed by the delta and b chains.

It localises to the cell membrane. It carries out the reaction ATP + H2O + 4 H(+)(in) = ADP + phosphate + 5 H(+)(out). Functionally, produces ATP from ADP in the presence of a proton gradient across the membrane. The catalytic sites are hosted primarily by the beta subunits. The protein is ATP synthase subunit beta of Bacillus cereus (strain B4264).